A 417-amino-acid chain; its full sequence is S-adenosylmethionine synthase (417 aa).

His16 is an ATP binding site. Asp18 contributes to the Mg(2+) binding site. Position 44 (Glu44) interacts with K(+). L-methionine contacts are provided by Glu57 and Gln100. The tract at residues 100 to 110 (QSPDIAQGVDT) is flexible loop. Residues 175-177 (DGK), 251-252 (KF), Asp260, 266-267 (RK), Ala283, and Lys287 each bind ATP. Residue Asp260 coordinates L-methionine. Lys291 provides a ligand contact to L-methionine.

It belongs to the AdoMet synthase family. As to quaternary structure, homotetramer; dimer of dimers. Mg(2+) is required as a cofactor. It depends on K(+) as a cofactor.

The protein resides in the cytoplasm. It catalyses the reaction L-methionine + ATP + H2O = S-adenosyl-L-methionine + phosphate + diphosphate. It participates in amino-acid biosynthesis; S-adenosyl-L-methionine biosynthesis; S-adenosyl-L-methionine from L-methionine: step 1/1. Functionally, catalyzes the formation of S-adenosylmethionine (AdoMet) from methionine and ATP. The overall synthetic reaction is composed of two sequential steps, AdoMet formation and the subsequent tripolyphosphate hydrolysis which occurs prior to release of AdoMet from the enzyme. The chain is S-adenosylmethionine synthase from Synechococcus elongatus (strain ATCC 33912 / PCC 7942 / FACHB-805) (Anacystis nidulans R2).